The primary structure comprises 248 residues: Serine/arginine-rich splicing factor 1 (248 aa).

S2 is subject to N-acetylserine. S2 carries the phosphoserine modification. Residues 16–91 form the RRM 1 domain; the sequence is CRIYVGNLPP…YRLRVEFPRS (76 aa). Residue K30 forms a Glycyl lysine isopeptide (Lys-Gly) (interchain with G-Cter in SUMO2) linkage. The residue at position 38 (K38) is an N6-acetyllysine; alternate. Residue K38 forms a Glycyl lysine isopeptide (Lys-Gly) (interchain with G-Cter in SUMO2); alternate linkage. The segment at 88 to 134 is disordered; sequence FPRSGRGTGRGGGGGGGGGAPRGRYGPPSRRSENRVVVSGLPPSGSW. An asymmetric dimethylarginine; alternate mark is found at R93, R97, and R109. Residues R93, R97, and R109 each carry the omega-N-methylarginine; alternate modification. Over residues 93-108 the composition is skewed to gly residues; it reads RGTGRGGGGGGGGGAP. At R111 the chain carries Omega-N-methylarginine. One can recognise an RRM 2 domain in the interval 121–195; the sequence is NRVVVSGLPP…ETAYIRVKVD (75 aa). A Phosphoserine modification is found at S133. The residue at position 179 (K179) is an N6-acetyllysine. A disordered region spans residues 191-248; the sequence is RVKVDGPRSPSYGRSRSRSRSRSRSRSRSNSRSRSYSPRRSRGSPRYSPRHSRSRSRT. The interaction with SAFB1 stretch occupies residues 198 to 247; sequence RSPSYGRSRSRSRSRSRSRSRSNSRSRSYSPRRSRGSPRYSPRHSRSRSR. 2 positions are modified to phosphoserine: S199 and S201. Phosphotyrosine is present on Y202. Phosphoserine occurs at positions 205, 207, 209, 231, 234, and 238. A compositionally biased stretch (basic residues) spans 205 to 248; it reads SRSRSRSRSRSRSRSNSRSRSYSPRRSRGSPRYSPRHSRSRSRT.

Belongs to the splicing factor SR family. In terms of assembly, consists of two polypeptides of p32 and p33. Identified in the spliceosome C complex. Component of a ribonucleoprotein complex containing mRNAs and RNA-binding proteins including DDX5, HNRNPH2 and SRSF1 as well as splicing regulator ARVCF. In vitro, self-associates and binds SRSF2, SNRNP70 and U2AF1 but not U2AF2. Binds SREK1/SFRS12. Interacts with SAFB/SAFB1. Interacts with PSIP1/LEDGF. Interacts with RSRC1 (via Arg/Ser-rich domain). Interacts with ZRSR2/U2AF1-RS2. Interacts with CCDC55 (via C-terminus). Interacts with SRPK1 and a sliding docking interaction is essential for its sequential and processive phosphorylation by SRPK1. Interacts with NXF1. Interacts with CCNL1, CCNL2 and CDK11B. Interacts with RRP1B. Interacts (when phosphorylated in its RS domain) with TNPO3; promoting nuclear import. Interacts with ILDR1 (via C-terminus) and ILDR2. In terms of processing, phosphorylated by CLK1, CLK2, CLK3 and CLK4. Phosphorylated by SRPK1 at multiple serines in its RS domain via a directional (C-terminal to N-terminal) and a dual-track mechanism incorporating both processive phosphorylation (in which the kinase stays attached to the substrate after each round of phosphorylation) and distributive phosphorylation steps (in which the kinase and substrate dissociate after each phosphorylation event). The RS domain of SRSF1 binds to a docking groove in the large lobe of the kinase domain of SRPK1 and this induces certain structural changes in SRPK1 and/or RRM 2 domain of SRSF1, allowing RRM 2 to bind the kinase and initiate phosphorylation. The cycles continue for several phosphorylation steps in a processive manner (steps 1-8) until the last few phosphorylation steps (approximately steps 9-12). During that time, a mechanical stress induces the unfolding of the beta-4 motif in RRM 2, which then docks at the docking groove of SRPK1. This also signals RRM 2 to begin to dissociate, which facilitates SRSF1 dissociation after phosphorylation is completed. Asymmetrically dimethylated at arginines, probably by PRMT1, methylation promotes localization to nuclear speckles.

It localises to the cytoplasm. The protein localises to the nucleus speckle. Plays a role in preventing exon skipping, ensuring the accuracy of splicing and regulating alternative splicing. Interacts with other spliceosomal components, via the RS domains, to form a bridge between the 5'- and 3'-splice site binding components, U1 snRNP and U2AF. Can stimulate binding of U1 snRNP to a 5'-splice site-containing pre-mRNA. Binds to purine-rich RNA sequences, either the octamer, 5'-RGAAGAAC-3' (r=A or G) or the decamers, AGGACAGAGC/AGGACGAAGC. Binds preferentially to the 5'-CGAGGCG-3' motif in vitro. Three copies of the octamer constitute a powerful splicing enhancer in vitro, the ASF/SF2 splicing enhancer (ASE) which can specifically activate ASE-dependent splicing. May function as export adapter involved in mRNA nuclear export through the TAP/NXF1 pathway. The protein is Serine/arginine-rich splicing factor 1 (SRSF1) of Bos taurus (Bovine).